The primary structure comprises 72 residues: Cold shock-like protein CspD (72 aa).

The region spanning 4–64 (GIVKWFNNAK…SDKGSHATKI (61 aa)) is the CSD domain.

It is found in the cytoplasm. This chain is Cold shock-like protein CspD (cspD), found in Haemophilus influenzae (strain ATCC 51907 / DSM 11121 / KW20 / Rd).